We begin with the raw amino-acid sequence, 178 residues long: Thioredoxin F1, chloroplastic (178 aa).

A disordered region spans residues 1 to 22; the sequence is MPLSLRLSPSPTALSPTTGGFG. Residues 1–57 constitute a chloroplast transit peptide; the sequence is MPLSLRLSPSPTALSPTTGGFGPSRKQCRIPYSGVPTTKIGFCSLDSRKRGDSSVVR. Polar residues predominate over residues 7 to 18; it reads LSPSPTALSPTT. Residues 58-174 form the Thioredoxin domain; that stretch reads CSLETVNVSV…LVAAIETARS (117 aa). Residues cysteine 99 and cysteine 102 each act as nucleophile in the active site. Residues cysteine 99 and cysteine 102 are joined by a disulfide bond. Cysteine 126 carries the S-glutathionyl cysteine; transient modification.

It belongs to the thioredoxin family. Plant F-type subfamily. Glutathionylation at Cys-126 decreases its ability to be reduced by ferredoxin-thioredoxin reductase and reduces its efficiency in activating target chloroplastic enzymes.

It localises to the plastid. The protein localises to the chloroplast stroma. Functionally, thiol-disulfide oxidoreductase involved in the redox regulation of enzymes of both reductive pentose phosphate pathway (Calvin-Benson cycle) and oxidative pentose phosphate pathway. Under light or reducing conditions, activates in chloroplast the glyceraldehyde-3-phosphate dehydrogenase, the phosphoribulokinase and the fructose-1,6-bisphosphate phosphatase, and inhibits the glucose-6-phosphate dehydrogenase. The chain is Thioredoxin F1, chloroplastic from Arabidopsis thaliana (Mouse-ear cress).